The chain runs to 301 residues: Acetylglutamate kinase (301 aa).

Residues 68–69 (GG), Arg90, and Asn195 contribute to the substrate site.

The protein belongs to the acetylglutamate kinase family. ArgB subfamily.

Its subcellular location is the cytoplasm. It catalyses the reaction N-acetyl-L-glutamate + ATP = N-acetyl-L-glutamyl 5-phosphate + ADP. The protein operates within amino-acid biosynthesis; L-arginine biosynthesis; N(2)-acetyl-L-ornithine from L-glutamate: step 2/4. Functionally, catalyzes the ATP-dependent phosphorylation of N-acetyl-L-glutamate. In Pseudomonas savastanoi pv. phaseolicola (strain 1448A / Race 6) (Pseudomonas syringae pv. phaseolicola (strain 1448A / Race 6)), this protein is Acetylglutamate kinase.